The primary structure comprises 361 residues: tRNA/tmRNA (uracil-C(5))-methyltransferase (361 aa).

The S-adenosyl-L-methionine site is built by glutamine 185, tyrosine 213, asparagine 218, glutamate 234, and aspartate 294. The active-site Nucleophile is cysteine 319. The active-site Proton acceptor is the glutamate 353.

The protein belongs to the class I-like SAM-binding methyltransferase superfamily. RNA M5U methyltransferase family. TrmA subfamily.

It carries out the reaction uridine(54) in tRNA + S-adenosyl-L-methionine = 5-methyluridine(54) in tRNA + S-adenosyl-L-homocysteine + H(+). The enzyme catalyses uridine(341) in tmRNA + S-adenosyl-L-methionine = 5-methyluridine(341) in tmRNA + S-adenosyl-L-homocysteine + H(+). Its function is as follows. Dual-specificity methyltransferase that catalyzes the formation of 5-methyluridine at position 54 (m5U54) in all tRNAs, and that of position 341 (m5U341) in tmRNA (transfer-mRNA). This chain is tRNA/tmRNA (uracil-C(5))-methyltransferase, found in Pseudomonas syringae pv. syringae (strain B728a).